The chain runs to 243 residues: Tetraspanin-36 (243 aa).

Residues Met1 to Lys9 lie on the Cytoplasmic side of the membrane. A helical transmembrane segment spans residues Thr10–Gly30. Residues Ser31–Thr49 are Lumenal-facing. The helical transmembrane segment at Leu50–Gly70 threads the bilayer. The Cytoplasmic segment spans residues Cys71–Leu84. Residues Phe85–Ile105 form a helical membrane-spanning segment. At Tyr106 to Ala208 the chain is on the lumenal side. Asn149, Asn163, and Asn174 each carry an N-linked (GlcNAc...) asparagine glycan. Residues Met209–Ile229 traverse the membrane as a helical segment. Over Thr230–Ala243 the chain is Cytoplasmic.

The protein belongs to the tetraspanin (TM4SF) family. N-glycosylated. Strongly expressed in melanophores and xanthophores. Also detected in eye, brain, heart, skin, fin, testis and ovary.

It localises to the golgi apparatus membrane. The protein localises to the endoplasmic reticulum membrane. Its function is as follows. Plays a role in migration and segregation of pigment cells (melanophores and xanthophores). Contributes to pigment stripe patterning in the epidermis. In Danio rerio (Zebrafish), this protein is Tetraspanin-36.